A 291-amino-acid chain; its full sequence is 4-hydroxybenzoate octaprenyltransferase (291 aa).

8 helical membrane passes run 23 to 43, 47 to 67, 98 to 118, 139 to 159, 171 to 191, 216 to 236, 238 to 258, and 267 to 287; these read PIGT…AADG, PALV…GCAI, LAVA…LNAL, FFAI…PMAY, WLML…YAMV, IMLC…ALAL, AAYW…YTLL, and FFVF…AALA.

This sequence belongs to the UbiA prenyltransferase family. Mg(2+) is required as a cofactor.

It localises to the cell inner membrane. It catalyses the reaction all-trans-octaprenyl diphosphate + 4-hydroxybenzoate = 4-hydroxy-3-(all-trans-octaprenyl)benzoate + diphosphate. It participates in cofactor biosynthesis; ubiquinone biosynthesis. Its function is as follows. Catalyzes the prenylation of para-hydroxybenzoate (PHB) with an all-trans polyprenyl group. Mediates the second step in the final reaction sequence of ubiquinone-8 (UQ-8) biosynthesis, which is the condensation of the polyisoprenoid side chain with PHB, generating the first membrane-bound Q intermediate 3-octaprenyl-4-hydroxybenzoate. This chain is 4-hydroxybenzoate octaprenyltransferase, found in Ralstonia nicotianae (strain ATCC BAA-1114 / GMI1000) (Ralstonia solanacearum).